An 852-amino-acid chain; its full sequence is Serine/threonine-protein phosphatase 6 regulatory subunit 3-A (852 aa).

Disordered stretches follow at residues Asn610–Glu653, Asn714–Ser742, and Asp817–Val852. Residues Asp627–Glu638 are compositionally biased toward acidic residues. A compositionally biased stretch (polar residues) spans Asn714–Glu732. A compositionally biased stretch (low complexity) spans Pro828–Gln840.

The protein belongs to the SAPS family.

Its function is as follows. Regulatory subunit of protein phosphatase 6 (PP6). May function as a scaffolding PP6 subunit. This chain is Serine/threonine-protein phosphatase 6 regulatory subunit 3-A (ppp6r3-a), found in Xenopus laevis (African clawed frog).